Consider the following 296-residue polypeptide: Glycine N-acyltransferase (296 aa).

Position 16 is an N6-acetyllysine; alternate (K16). N6-succinyllysine; alternate is present on K16. At K113 the chain carries N6-acetyllysine. K127 and K142 each carry N6-acetyllysine; alternate. 2 positions are modified to N6-succinyllysine; alternate: K127 and K142. N6-acetyllysine is present on K159. K169 bears the N6-succinyllysine mark. K183 and K256 each carry N6-acetyllysine; alternate. K183 and K256 each carry N6-succinyllysine; alternate. The residue at position 267 (K267) is an N6-succinyllysine.

This sequence belongs to the glycine N-acyltransferase family.

Its subcellular location is the mitochondrion. It carries out the reaction an acyl-CoA + glycine = an N-acylglycine + CoA + H(+). The enzyme catalyses benzoyl-CoA + glycine = N-benzoylglycine + CoA + H(+). Mitochondrial acyltransferase which transfers an acyl group to the N-terminus of glycine and glutamine, although much less efficiently. Can conjugate a multitude of substrates to form a variety of N-acylglycines, thereby detoxify xenobiotics, such as benzoic acid or salicylic acid, and endogenous organic acids, such as isovaleric acid. The polypeptide is Glycine N-acyltransferase (Glyat) (Rattus norvegicus (Rat)).